Consider the following 118-residue polypeptide: MLGVYLPIIVLVAVAVIFGLASLTFSSLIGQKKPSAVKLAPYECGCEPVGSARERFSVKFYIIAMLFILFDIEAVFMYPWSVLFKRLGIFGVVEMGLFIVILFVGYIYVWKKGALEWE.

3 helical membrane passes run 1–21 (MLGV…FGLA), 60–80 (FYII…MYPW), and 87–107 (LGIF…VGYI).

It belongs to the complex I subunit 3 family. As to quaternary structure, NDH-1 is composed of 14 different subunits. Subunits NuoA, H, J, K, L, M, N constitute the membrane sector of the complex.

It localises to the cell inner membrane. It carries out the reaction a quinone + NADH + 5 H(+)(in) = a quinol + NAD(+) + 4 H(+)(out). Functionally, NDH-1 shuttles electrons from NADH, via FMN and iron-sulfur (Fe-S) centers, to quinones in the respiratory chain. The immediate electron acceptor for the enzyme in this species is believed to be ubiquinone. Couples the redox reaction to proton translocation (for every two electrons transferred, four hydrogen ions are translocated across the cytoplasmic membrane), and thus conserves the redox energy in a proton gradient. This is NADH-quinone oxidoreductase subunit A 1 from Geobacter sulfurreducens (strain ATCC 51573 / DSM 12127 / PCA).